Here is a 163-residue protein sequence, read N- to C-terminus: ADP-ribosylation factor-like protein 2-binding protein (163 aa).

This sequence belongs to the ARL2BP family. In terms of assembly, interacts with GTP bound ARL2 and ARL3; the complex ARL2-ARL2BP as well as ARL2BP alone, binds to SLC25A4/ANT1. Interaction with ARL2 may be required for cilia basal body localization. Interacts with STAT3; interaction is enhanced with ARL2. Found in a complex with ARL2BP, ARL2 and SLC25A6. Found in a complex with ARL2, ARL2BP and SLC25A4. Interacts with STAT2, STAT3 and STAT4. In terms of tissue distribution, ubiquitous with higher expression in brain, especially in hippocampus and cortex. Also expressed in lung, cerebellum, liver, kidney, spleen and heart (at protein level).

The protein resides in the cytoplasm. It localises to the mitochondrion intermembrane space. The protein localises to the cytoskeleton. Its subcellular location is the microtubule organizing center. It is found in the centrosome. The protein resides in the nucleus. It localises to the spindle. The protein localises to the cilium basal body. Together with ARL2, plays a role in the nuclear translocation, retention and transcriptional activity of STAT3. May play a role as an effector of ARL2. This is ADP-ribosylation factor-like protein 2-binding protein (Arl2bp) from Rattus norvegicus (Rat).